We begin with the raw amino-acid sequence, 886 residues long: Desmocollin-1 (886 aa).

The N-terminal stretch at methionine 1 to alanine 29 is a signal peptide. Residues cysteine 30 to arginine 134 constitute a propeptide that is removed on maturation. N-linked (GlcNAc...) asparagine glycans are attached at residues asparagine 130 and asparagine 165. Cadherin domains follow at residues arginine 135 to phenylalanine 242, glutamate 243 to phenylalanine 354, threonine 355 to cysteine 471, glutamine 472 to proline 575, and glutamine 576 to aspartate 682. The Extracellular portion of the chain corresponds to arginine 135–lysine 691. Position 385 is a phosphothreonine (threonine 385). Asparagine 546 carries N-linked (GlcNAc...) (high mannose) asparagine glycosylation. Asparagine 613 carries N-linked (GlcNAc...) asparagine glycosylation. A helical transmembrane segment spans residues tryptophan 692–valine 714. The Cytoplasmic segment spans residues threonine 715 to lysine 886.

In terms of assembly, binds to JUP/plakoglobin. Expressed in the epidermis and inner root sheaths of hair follicles (at protein level).

It localises to the cell membrane. The protein resides in the cell junction. The protein localises to the desmosome. Its function is as follows. A component of desmosome cell-cell junctions which are required for positive regulation of cellular adhesion. Required for desmosome adhesion strength between the granular layers of the epidermis, as a result moderates epidermal proliferation and differentiation. Is therefore required to maintain postnatal epidermal barrier function and normal hair follicle morphology into adulthood. The polypeptide is Desmocollin-1 (Dsc1) (Mus musculus (Mouse)).